Here is a 249-residue protein sequence, read N- to C-terminus: FMN reductase (NADPH) (249 aa).

It belongs to the flavin oxidoreductase frp family. In terms of assembly, homodimer.

The enzyme catalyses FMNH2 + NADP(+) = FMN + NADPH + 2 H(+). In terms of biological role, reduces FMNH(2) to FMN, with NADPH as reductant. It also reduces nitroaromatic compounds, quinones and azo dyes. This Bacillus subtilis (strain 168) protein is FMN reductase (NADPH) (nfrA1).